A 190-amino-acid polypeptide reads, in one-letter code: UPF0301 protein DP2218 (190 aa).

It belongs to the UPF0301 (AlgH) family.

The protein is UPF0301 protein DP2218 of Desulfotalea psychrophila (strain LSv54 / DSM 12343).